The following is a 559-amino-acid chain: Regulatory protein PHO2 (559 aa).

4 disordered regions span residues 16 to 88 (ATDL…KGEA), 132 to 158 (LRKK…DYDR), 293 to 333 (INSN…AKDN), and 534 to 559 (PTDS…HRWI). Composition is skewed to low complexity over residues 24 to 52 (HDQQ…IQTQ) and 63 to 74 (NDMSASSNASDS). A DNA-binding region (homeobox) is located at residues 77-136 (QRPKRTRAKGEALDVLKRKFEINPTPSLVERKKISDLIGMPEKNVRIWFQNRRAKLRKKQ). Polar residues predominate over residues 141 to 151 (KDTIPSSQSRD). Residues 293–307 (INSNNTSDKNNSNTN) are compositionally biased toward low complexity. Over residues 308 to 323 (NDDDNDDNSNEDNDNS) the composition is skewed to acidic residues. The segment covering 324-333 (SEDKRNAKDN) has biased composition (basic and acidic residues). Position 542 is a phosphothreonine (threonine 542).

Its subcellular location is the nucleus. Its function is as follows. Regulator in phosphate metabolism and acts as a derepressor of another central regulator PHO5. Binds to the upstream activator sequence (UAS) of PHO5. It also binds to the TRP4, HIS4, and CYC1 promoters. The polypeptide is Regulatory protein PHO2 (PHO2) (Saccharomyces cerevisiae (strain ATCC 204508 / S288c) (Baker's yeast)).